The chain runs to 1608 residues: Adenylate cyclase type 10 (1608 aa).

2 consecutive Guanylate cyclase domains span residues 42-179 (VLMF…RLAQ) and 293-418 (TIVF…ARMM). Residues Asp-47 and Ile-48 each contribute to the Mg(2+) site. Residue 47 to 52 (DISGFT) participates in ATP binding. Lys-95 provides a ligand contact to hydrogencarbonate. Mg(2+) is bound at residue Asp-99. Residues Asp-99 and Lys-144 each coordinate ATP. 3 residues coordinate hydrogencarbonate: Val-167, Arg-176, and Met-337. Residues Val-406 and 412-416 (NIAAR) contribute to the ATP site.

It belongs to the adenylyl cyclase class-4/guanylyl cyclase family. Mg(2+) serves as cofactor. Requires Mn(2+) as cofactor. Post-translationally, cleavage may occur to generate the active 48 kDa form. As to expression, detected in testis (at protein level). Preferentially expressed in testis.

Its subcellular location is the cell membrane. It localises to the cytoplasm. It is found in the cytoskeleton. The protein resides in the perinuclear region. The protein localises to the nucleus. Its subcellular location is the cell projection. It localises to the cilium. It is found in the mitochondrion. The enzyme catalyses ATP = 3',5'-cyclic AMP + diphosphate. Its activity is regulated as follows. Activated by manganese or magnesium ions. In the presence of magnesium ions, the enzyme is activated by bicarbonate. Calcium mildly increases the enzyme activity, also in the presence of magnesium ions. Its function is as follows. Catalyzes the formation of the signaling molecule cAMP. May function as sensor that mediates responses to changes in cellular bicarbonate and CO(2) levels. Has a critical role in mammalian spermatogenesis by producing the cAMP which regulates cAMP-responsive nuclear factors indispensable for sperm maturation in the epididymis. Induces capacitation, the maturational process that sperm undergo prior to fertilization. Involved in ciliary beat regulation. The protein is Adenylate cyclase type 10 (Adcy10) of Rattus norvegicus (Rat).